The sequence spans 85 residues: MAHKKAGGSTRNGRDSESKRLGVKRFGGESVLAGSIIVRQRGTKFHAGNNVGCGRDHTLFALADGKVKFEVKGPKNRKFISIEAE.

Residues 1–21 are disordered; the sequence is MAHKKAGGSTRNGRDSESKRL.

The protein belongs to the bacterial ribosomal protein bL27 family.

This chain is Large ribosomal subunit protein bL27, found in Photorhabdus laumondii subsp. laumondii (strain DSM 15139 / CIP 105565 / TT01) (Photorhabdus luminescens subsp. laumondii).